A 319-amino-acid chain; its full sequence is Beta-ketoacyl-[acyl-carrier-protein] synthase III (319 aa).

Active-site residues include Cys112 and His246. The ACP-binding stretch occupies residues 247 to 251 (QANFR). Residue Asn276 is part of the active site.

It belongs to the thiolase-like superfamily. FabH family. In terms of assembly, homodimer.

Its subcellular location is the cytoplasm. It carries out the reaction malonyl-[ACP] + acetyl-CoA + H(+) = 3-oxobutanoyl-[ACP] + CO2 + CoA. It functions in the pathway lipid metabolism; fatty acid biosynthesis. In terms of biological role, catalyzes the condensation reaction of fatty acid synthesis by the addition to an acyl acceptor of two carbons from malonyl-ACP. Catalyzes the first condensation reaction which initiates fatty acid synthesis and may therefore play a role in governing the total rate of fatty acid production. Possesses both acetoacetyl-ACP synthase and acetyl transacylase activities. Its substrate specificity determines the biosynthesis of branched-chain and/or straight-chain of fatty acids. This chain is Beta-ketoacyl-[acyl-carrier-protein] synthase III, found in Pseudoalteromonas atlantica (strain T6c / ATCC BAA-1087).